A 26-amino-acid chain; its full sequence is Acyl carrier protein (26 aa).

Residues 2-26 enclose the Carrier domain; the sequence is SDIEQRIKQAVAEQLGMRAEEIKNE.

It belongs to the acyl carrier protein (ACP) family. Post-translationally, 4'-phosphopantetheine is transferred from CoA to a specific serine of apo-ACP by AcpS. This modification is essential for activity because fatty acids are bound in thioester linkage to the sulfhydryl of the prosthetic group.

The protein localises to the cytoplasm. Its pathway is lipid metabolism; fatty acid biosynthesis. Its function is as follows. Carrier of the growing fatty acid chain in fatty acid biosynthesis. This Acinetobacter calcoaceticus protein is Acyl carrier protein (acpP).